The chain runs to 102 residues: MEIKITSDRANPLLHRREVKFIANYDGTTPSVNEIKMKITAMLNADKSLTIVDSICQEYGNTESLGYVKIYDDEKSMNLFEKKSVLEKNKIEEAETTEEDGE.

It belongs to the eukaryotic ribosomal protein eS24 family.

The protein is Small ribosomal subunit protein eS24 of Methanococcus aeolicus (strain ATCC BAA-1280 / DSM 17508 / OCM 812 / Nankai-3).